Consider the following 825-residue polypeptide: PR domain zinc finger protein 1 (825 aa).

One can recognise an SET domain in the interval P84–C201. The segment covering I324–S361 has biased composition (low complexity). Residues I324–E369 form a disordered region. The interaction with PIAS1 stretch occupies residues H527–K574. C2H2-type zinc fingers lie at residues Y575–H597, F603–H625, H631–H653, and Y659–H681. A Glycyl lysine isopeptide (Lys-Gly) (interchain with G-Cter in SUMO1); alternate cross-link involves residue K816. A Glycyl lysine isopeptide (Lys-Gly) (interchain with G-Cter in SUMO2); alternate cross-link involves residue K816.

Belongs to the class V-like SAM-binding methyltransferase superfamily. Interacts with PRMT5. Interacts with FBXO10. Interacts with FBXO11. Interacts with multiple nuclear sumoylation E3 ligases, including CBX4, PIAS1, PIAS2, PIAS3, PIAS4, PML and RNF4, but not RANBP2. Interacts with LDB1, SMARCD3 and SMARCC1. Interacts with EEIG1; following TNFSF11/RANKL stimulation in bone marrow-derived macrophages, the interaction promotes the binding of PRDM1/BLIMP1 to the gene promoter of IRF8. Post-translationally, sumoylation at Lys-816 by PIAS1 augments transcriptional repressor activity, and is critical for plasma cell differentiation. Can be sumoylated with SUMO1 and SUMO2 by PML. Degradation of the wild-type protein mostly depends upon sumoylation, rather than ubiquitination. Desumoylated by SENP1 and SENP6. In terms of processing, ubiquitinated by the SCF(FBXO11) complex, leading to its degradation by the proteasome.

It localises to the nucleus. The protein resides in the cytoplasm. Its function is as follows. Transcription factor that mediates a transcriptional program in various innate and adaptive immune tissue-resident lymphocyte T cell types such as tissue-resident memory T (Trm), natural killer (trNK) and natural killer T (NKT) cells and negatively regulates gene expression of proteins that promote the egress of tissue-resident T-cell populations from non-lymphoid organs. Plays a role in the development, retention and long-term establishment of adaptive and innate tissue-resident lymphocyte T cell types in non-lymphoid organs, such as the skin and gut, but also in other nonbarrier tissues like liver and kidney, and therefore may provide immediate immunological protection against reactivating infections or viral reinfection. Binds specifically to the PRDI element in the promoter of the beta-interferon gene. Drives the maturation of B-lymphocytes into Ig secreting cells. Associates with the transcriptional repressor ZNF683 to chromatin at gene promoter regions. Binds to the promoter and acts as a transcriptional repressor of IRF8, thereby promotes transcription of osteoclast differentiation factors such as NFATC1 and EEIG1. This is PR domain zinc finger protein 1 (PRDM1) from Homo sapiens (Human).